The primary structure comprises 75 residues: UPF0270 protein PST_1436 (75 aa).

It belongs to the UPF0270 family.

The chain is UPF0270 protein PST_1436 from Stutzerimonas stutzeri (strain A1501) (Pseudomonas stutzeri).